The primary structure comprises 190 residues: Translation initiation factor IF-3 (190 aa).

It belongs to the IF-3 family. Monomer.

The protein resides in the cytoplasm. In terms of biological role, IF-3 binds to the 30S ribosomal subunit and shifts the equilibrium between 70S ribosomes and their 50S and 30S subunits in favor of the free subunits, thus enhancing the availability of 30S subunits on which protein synthesis initiation begins. This chain is Translation initiation factor IF-3, found in Prochlorococcus marinus (strain MIT 9312).